A 1317-amino-acid polypeptide reads, in one-letter code: Immunoglobulin superfamily member 1 (1317 aa).

The N-terminal stretch at 1 to 20 (MMLRTFTLLLLCIWLNPGMT) is a signal peptide. Ig-like C2-type domains follow at residues 21 to 112 (SLAV…KILE), 114 to 211 (EAPG…KLVV), 216 to 302 (PKPT…SDIL), 311 to 398 (PKTW…ATYN), and 400 to 481 (VELM…HRSK). The Extracellular portion of the chain corresponds to 21–499 (SLAVESQPEL…GFLTWNSILN (479 aa)). N-linked (GlcNAc...) asparagine glycosylation occurs at asparagine 43. A disulfide bridge links cysteine 48 with cysteine 96. Cysteine 238 and cysteine 286 are joined by a disulfide. 2 N-linked (GlcNAc...) asparagine glycosylation sites follow: asparagine 328 and asparagine 371. Disulfide bonds link cysteine 333/cysteine 382 and cysteine 422/cysteine 465. Residues 500-520 (EAVRVSLTMQLASLLLLVVWI) form a helical membrane-spanning segment. Residues 521-531 (RWKCRRLRLRE) are Cytoplasmic-facing. A helical membrane pass occupies residues 532 to 552 (AWLLGTAQGVAMLFILMALLC). Residues 553–1317 (CGLCNGALTE…EVSVELTVPI (765 aa)) are Extracellular-facing. Ig-like C2-type domains lie at 570-658 (TPKP…ALEL), 659-753 (VGTD…ELVI), 758-850 (PKPF…LVVT), 854-938 (PKPT…SSLS), 946-1041 (TDTF…ELIV), 1046-1131 (PKPS…NHSN), and 1142-1223 (PKPS…EPSD). Cysteine 780 and cysteine 830 are oxidised to a cystine. N-linked (GlcNAc...) asparagine glycosylation occurs at asparagine 871. Cysteine 876 and cysteine 923 are disulfide-bonded. N-linked (GlcNAc...) asparagine glycosylation is found at asparagine 967 and asparagine 1063. Intrachain disulfides connect cysteine 1068–cysteine 1115 and cysteine 1164–cysteine 1207. The tract at residues 1290-1310 (NQEGEPGTTTNSPSSASQEVS) is disordered. The span at 1296–1309 (GTTTNSPSSASQEV) shows a compositional bias: polar residues.

In terms of assembly, interacts with INHA; the interaction is not confirmed by standard receptor binding assays. Interacts with ACVR1B; the interaction appears to be ligand-dependent as it is diminished by inhibin B and activin A. Interacts with ACVR2A, ACVR2B, ACVRL1 and BMPR1B. Interacts with HECTD1.

The protein resides in the membrane. Its subcellular location is the secreted. Its function is as follows. Seems to be a coreceptor in inhibin signaling, but seems not to be a high-affinity inhibin receptor. Antagonizes activin A signaling in the presence or absence of inhibin B. Necessary to mediate a specific antagonistic effect of inhibin B on activin-stimulated transcription. The polypeptide is Immunoglobulin superfamily member 1 (Igsf1) (Mus musculus (Mouse)).